The primary structure comprises 304 residues: Tyrosine recombinase XerC (304 aa).

The Core-binding (CB) domain maps to 2–88 (ANVKNFLTLF…ALRSFYKFLL (87 aa)). Residues 109–294 (RIPKFLYEKE…SKDMLRKTYM (186 aa)) enclose the Tyr recombinase domain. Active-site residues include R149, K173, H246, R249, and H272. Y281 functions as the O-(3'-phospho-DNA)-tyrosine intermediate in the catalytic mechanism.

This sequence belongs to the 'phage' integrase family. XerC subfamily. As to quaternary structure, forms a cyclic heterotetrameric complex composed of two molecules of XerC and two molecules of XerD.

The protein localises to the cytoplasm. Its function is as follows. Site-specific tyrosine recombinase, which acts by catalyzing the cutting and rejoining of the recombining DNA molecules. The XerC-XerD complex is essential to convert dimers of the bacterial chromosome into monomers to permit their segregation at cell division. It also contributes to the segregational stability of plasmids. The sequence is that of Tyrosine recombinase XerC from Bacillus licheniformis (strain ATCC 14580 / DSM 13 / JCM 2505 / CCUG 7422 / NBRC 12200 / NCIMB 9375 / NCTC 10341 / NRRL NRS-1264 / Gibson 46).